Here is a 127-residue protein sequence, read N- to C-terminus: Large ribosomal subunit protein bL12 (127 aa).

It belongs to the bacterial ribosomal protein bL12 family. In terms of assembly, homodimer. Part of the ribosomal stalk of the 50S ribosomal subunit. Forms a multimeric L10(L12)X complex, where L10 forms an elongated spine to which 2 to 4 L12 dimers bind in a sequential fashion. Binds GTP-bound translation factors.

Its function is as follows. Forms part of the ribosomal stalk which helps the ribosome interact with GTP-bound translation factors. Is thus essential for accurate translation. The polypeptide is Large ribosomal subunit protein bL12 (Nitratiruptor sp. (strain SB155-2)).